A 193-amino-acid polypeptide reads, in one-letter code: Putative kinase protein 029R (193 aa).

Glycine 9–serine 17 serves as a coordination point for ATP. Residues glutamate 31, tyrosine 43, and glutamine 54 each coordinate substrate. Glutamate 78 serves as the catalytic Proton acceptor. Arginine 79 and glutamate 142 together coordinate substrate.

The protein belongs to the DCK/DGK family.

The chain is Putative kinase protein 029R from Aedes vexans (Inland floodwater mosquito).